The following is a 473-amino-acid chain: SHC-transforming protein 1 (473 aa).

Residues 1–26 (MNKLSGGGGRRTRVEGGQLGGEEWTR) are disordered. Position 29 is a phosphoserine (Ser-29). At Lys-44 the chain carries N6-acetyllysine. One can recognise a PID domain in the interval 46–229 (MGPGVSYLVR…AGFDGSAWDE (184 aa)). The segment at 216 to 314 (HDRMAGFDGS…PSSGRELFDD (99 aa)) is disordered. Residues 230–377 (EEEEPPDHQY…AMAEQLRGEP (148 aa)) are CH1. Phosphotyrosine is present on residues Tyr-239, Tyr-240, and Tyr-317. The tract at residues 328-348 (QAGAGAGPPNPTINGSAPRDL) is disordered. Phosphoserine is present on Ser-343. The region spanning 378–469 (WFHGKLSRRE…GSELCLQQPV (92 aa)) is the SH2 domain.

As to quaternary structure, interacts with CPNE3; this interaction may mediate the binding of CPNE3 with ERBB2. Interacts with the Trk receptors NTRK1, NTRK2 and NTRK3; in a phosphotyrosine-dependent manner. Interacts with the NPXY motif of tyrosine-phosphorylated IGF1R and INSR in vitro via the PID domain. Once activated, binds to GRB2. Interacts with tyrosine-phosphorylated CD3T and DDR2. Interacts with the N-terminal region of APS. Interacts with phosphorylated LRP1 and IRS4. Interacts with INPP5D/SHIP1 and INPPL1/SHIP2. Interacts with ALK, GAB2, GRB7 and KIT. Interacts with PTPN6/SHP (tyrosine phosphorylated). Identified in a complex containing FGFR4, NCAM1, CDH2, PLCG1, FRS2, SRC, SHC1, GAP43 and CTTN. Interacts with FLT4 (tyrosine-phosphorylated). Interacts with EPHB1 and GRB2; activates the MAPK/ERK cascade to regulate cell migration. Interacts with PDGFRB (tyrosine-phosphorylated). Interacts with ERBB4. Interacts with TEK/TIE2 (tyrosine-phosphorylated). Interacts with PTK2/FAK1. Interacts with CEACAM1; this interaction is CEACAM1-phosphorylation-dependent and mediates interaction with EGFR or INSR resulting in decrease coupling of SHC1 to the MAPK3/ERK1-MAPK1/ERK2 pathway. Interacts (via PID domain) with PEAK1 (when phosphorylated). Found in a complex with PPP1CA, PPP1CC, SHC1 and PEAK1. Post-translationally, phosphorylated by activated epidermal growth factor receptor. Phosphorylated in response to KIT signaling. Tyrosine phosphorylated in response to FLT3 and FLT4 signaling and by ligand-activated ALK. Tyrosine phosphorylated by ligand-activated PDGFRB. Tyrosine phosphorylated by TEK/TIE2. May be tyrosine phosphorylated by activated PTK2/FAK1. Tyrosine phosphorylated by activated PTK2B/PYK2. Dephosphorylation by PTPN2 may regulate interaction with GRB2.

It is found in the cytoplasm. Its subcellular location is the cell junction. The protein resides in the focal adhesion. Signaling adapter that couples activated growth factor receptors to signaling pathways. Participates in a signaling cascade initiated by activated KIT and KITLG/SCF. Participates in signaling downstream of the angiopoietin receptor TEK/TIE2, and plays a role in the regulation of endothelial cell migration and sprouting angiogenesis. The polypeptide is SHC-transforming protein 1 (SHC1) (Bos taurus (Bovine)).